Here is a 524-residue protein sequence, read N- to C-terminus: Tyrosine-protein kinase HCK (524 aa).

2 disordered regions span residues 1-20 (MGGRSSCEDPGCPRGEGRVP) and 35-71 (KASKIEPNANQKGPVYVPDPTSPKKLGPNSINSLPPG). Residue Gly2 is the site of N-myristoyl glycine attachment. Gly3 is lipidated: S-palmitoyl cysteine. Position 50 is a phosphotyrosine; by autocatalysis (Tyr50). The SH3 domain occupies 76 to 136 (SEDTIVVALY…PSNYVARVNS (61 aa)). The SH2 domain maps to 142–239 (WFFKGISRKD…GLCQKLSVPC (98 aa)). Thr200 is subject to Phosphothreonine. Tyr207 carries the post-translational modification Phosphotyrosine. Residues 260 to 513 (LQMEKKLGAG…YIQSVLDDFY (254 aa)) enclose the Protein kinase domain. Residues 266–274 (LGAGQFGEV) and Lys288 each bind ATP. The Proton acceptor role is filled by Asp379. Phosphotyrosine; by autocatalysis is present on Tyr409. Phosphoserine is present on Ser460. Tyr520 is subject to Phosphotyrosine.

Belongs to the protein kinase superfamily. Tyr protein kinase family. SRC subfamily. In terms of assembly, interacts with ADAM15. Interacts with FASLG. Interacts with ARRB1 and ARRB2. Interacts with FCGR1A; the interaction may be indirect. Interacts with IL6ST. Interacts (via SH3 domain) with ELMO1. Interacts (via SH3 domain) with TP73. Interacts with YAP1. Interacts with ABL1 and ITGB1, and thereby recruits ABL1 to activated ITGB1. Interacts (via SH2 domain) with FLT3 (tyrosine phosphorylated). Interacts with CBL. Interacts with VAV1, WAS and RAPGEF1. Interacts (via SH3 domain) with WDCP. Post-translationally, phosphorylated on several tyrosine residues. Autophosphorylated. Becomes rapidly phosphorylated upon activation of the immunoglobulin receptors FCGR1A and FCGR2A. Phosphorylation at Tyr-409 increases kinase activity. Phosphorylation at Tyr-520 inhibits kinase activity. Kinase activity is not required for phosphorylation at Tyr-520, suggesting that this site may be a target of other kinases. In terms of processing, ubiquitinated by CBL, leading to its degradation via the proteasome. Isoform 2 palmitoylation at position 2 requires prior myristoylation. Palmitoylation at position 3 is required for caveolar localization of isoform 2. Expressed strongly in spleen and at very low levels in thymus.

It localises to the cytoplasmic vesicle. The protein localises to the secretory vesicle. The protein resides in the cytoplasm. Its subcellular location is the cytosol. It is found in the membrane. It localises to the caveola. The protein localises to the lysosome. The protein resides in the cell projection. Its subcellular location is the podosome membrane. It is found in the cell membrane. It localises to the cell junction. The protein localises to the focal adhesion. The protein resides in the cytoskeleton. Its subcellular location is the golgi apparatus. It is found in the nucleus. The catalysed reaction is L-tyrosyl-[protein] + ATP = O-phospho-L-tyrosyl-[protein] + ADP + H(+). With respect to regulation, subject to autoinhibition, mediated by intramolecular interactions involving the SH2 and SH3 domains. Kinase activity is also regulated by phosphorylation at regulatory tyrosine residues. Phosphorylation at Tyr-409 is required for optimal activity. Phosphorylation at Tyr-520 inhibits kinase activity. Non-receptor tyrosine-protein kinase found in hematopoietic cells that transmits signals from cell surface receptors and plays an important role in the regulation of innate immune responses, including neutrophil, monocyte, macrophage and mast cell functions, phagocytosis, cell survival and proliferation, cell adhesion and migration. Acts downstream of receptors that bind the Fc region of immunoglobulins, such as FCGR1A and FCGR2A, but also CSF3R, PLAUR, the receptors for IFNG, IL2, IL6 and IL8, and integrins, such as ITGB1 and ITGB2. During the phagocytic process, mediates mobilization of secretory lysosomes, degranulation, and activation of NADPH oxidase to bring about the respiratory burst. Plays a role in the release of inflammatory molecules. Promotes reorganization of the actin cytoskeleton and actin polymerization, formation of podosomes and cell protrusions. Inhibits TP73-mediated transcription activation and TP73-mediated apoptosis. Phosphorylates CBL in response to activation of immunoglobulin gamma Fc region receptors. Phosphorylates ADAM15, BCR, ELMO1, FCGR2A, GAB1, GAB2, RAPGEF1, STAT5B, TP73, VAV1 and WAS. This is Tyrosine-protein kinase HCK (Hck) from Rattus norvegicus (Rat).